Here is a 130-residue protein sequence, read N- to C-terminus: MLRKFKISIDGKEYLVEMEEISESSVPAATPITPTTENTRAASDQKQQSQTPSPAATASAANTMPAPMPGTILKVLVNVGDTVSENQPLMILEAMKMENEIVAGMAGTVSAIHVSSGQTVNAGDNLITIA.

The segment at E20–M64 is disordered. Positions E23–K46 are enriched in polar residues. The segment covering Q47 to M64 has biased composition (low complexity). The region spanning A55–A130 is the Biotinyl-binding domain. N6-biotinyllysine is present on K96.

In Streptococcus mutans serotype c (strain ATCC 700610 / UA159), this protein is Biotin carboxyl carrier protein (bcc).